We begin with the raw amino-acid sequence, 669 residues long: Dymeclin (669 aa).

The N-myristoyl glycine moiety is linked to residue G2.

This sequence belongs to the dymeclin family. As to quaternary structure, interacts with GOLM1 and PPIB. In terms of processing, myristoylated in vitro; myristoylation is not essential for protein targeting to Golgi compartment.

It localises to the cytoplasm. The protein localises to the golgi apparatus. Its subcellular location is the membrane. Its function is as follows. Necessary for correct organization of Golgi apparatus. Involved in bone development. The sequence is that of Dymeclin (DYM) from Pongo abelii (Sumatran orangutan).